The sequence spans 451 residues: Mannan endo-1,6-alpha-mannosidase DFG5 (451 aa).

Positions 1 to 21 (MVSLQQLTISILLLFTASVQS) are cleaved as a signal peptide. Asn-86, Asn-111, Asn-135, Asn-203, Asn-243, Asn-268, and Asn-402 each carry an N-linked (GlcNAc...) asparagine glycan. Ala-429 carries the GPI-anchor amidated alanine lipid modification. The propeptide at 430–451 (GAGVLTAIVLAVILGGAIWMIF) is removed in mature form.

This sequence belongs to the glycosyl hydrolase 76 family. Post-translationally, the GPI-anchor is attached to the protein in the endoplasmic reticulum and serves to target the protein to the cell surface. There, the glucosamine-inositol phospholipid moiety is cleaved off and the GPI-modified mannoprotein is covalently attached via its lipidless GPI glycan remnant to the 1,6-beta-glucan of the outer cell wall layer. In terms of processing, N-mannosylated.

Its subcellular location is the secreted. The protein resides in the cell wall. It localises to the cell membrane. The enzyme catalyses Random hydrolysis of (1-&gt;6)-alpha-D-mannosidic linkages in unbranched (1-&gt;6)-mannans.. Required for normal synthesis of the cell wall and alkaline pH-induced hypha formation. The chain is Mannan endo-1,6-alpha-mannosidase DFG5 (DFG5) from Candida albicans (strain SC5314 / ATCC MYA-2876) (Yeast).